The chain runs to 54 residues: Light-harvesting protein B-880 beta chain (54 aa).

The Cytoplasmic segment spans residues 1–20 (AEDRSSLSGVSDAEAKEFHA). A bacteriochlorophyll-binding residues include histidine 19 and histidine 37. A helical membrane pass occupies residues 21–43 (LFVSSFTAFIVIAVLAHVLAWAW). Residues 44–54 (RPWIPGPKGWA) are Periplasmic-facing.

It belongs to the antenna complex beta subunit family. In terms of assembly, the core complex is formed by different alpha and beta chains, binding bacteriochlorophyll molecules, and arranged most probably in tetrameric structures disposed around the reaction center. The non-pigmented gamma chains may constitute additional components.

It localises to the cell inner membrane. In terms of biological role, antenna complexes are light-harvesting systems, which transfer the excitation energy to the reaction centers. The chain is Light-harvesting protein B-880 beta chain from Rhodoblastus acidophilus (Rhodopseudomonas acidophila).